Reading from the N-terminus, the 170-residue chain is Inosine/xanthosine triphosphatase (170 aa).

It belongs to the YjjX NTPase family. As to quaternary structure, homodimer. It depends on Mg(2+) as a cofactor. Mn(2+) is required as a cofactor.

The catalysed reaction is XTP + H2O = XDP + phosphate + H(+). It carries out the reaction ITP + H2O = IDP + phosphate + H(+). Its function is as follows. Phosphatase that hydrolyzes non-canonical purine nucleotides such as XTP and ITP to their respective diphosphate derivatives. Probably excludes non-canonical purines from DNA/RNA precursor pool, thus preventing their incorporation into DNA/RNA and avoiding chromosomal lesions. This is Inosine/xanthosine triphosphatase from Aliivibrio fischeri (strain ATCC 700601 / ES114) (Vibrio fischeri).